A 411-amino-acid polypeptide reads, in one-letter code: Adenylosuccinate synthetase (411 aa).

Residues G11–K17 and G39–T41 each bind GTP. D12 (proton acceptor) is an active-site residue. 2 residues coordinate Mg(2+): D12 and G39. Residues D12 to K15, N37 to H40, T121, R135, Q215, T230, and R294 each bind IMP. The active-site Proton donor is H40. Residue T290–R296 participates in substrate binding. GTP is bound by residues R296, K322–D324, and S400–S402.

This sequence belongs to the adenylosuccinate synthetase family. As to quaternary structure, homodimer. It depends on Mg(2+) as a cofactor.

It is found in the cytoplasm. It catalyses the reaction IMP + L-aspartate + GTP = N(6)-(1,2-dicarboxyethyl)-AMP + GDP + phosphate + 2 H(+). It participates in purine metabolism; AMP biosynthesis via de novo pathway; AMP from IMP: step 1/2. Functionally, plays an important role in the de novo pathway of purine nucleotide biosynthesis. Catalyzes the first committed step in the biosynthesis of AMP from IMP. This Helicobacter pylori (strain P12) protein is Adenylosuccinate synthetase.